A 550-amino-acid polypeptide reads, in one-letter code: Putative golgin subfamily A member 6-like protein 19 (550 aa).

Pro residues predominate over residues 1–11 (MWPQPRLPPHP). Positions 1 to 77 (MWPQPRLPPH…DSATGVYGEG (77 aa)) are disordered. Over residues 51 to 62 (NGSSPDTATSGG) the composition is skewed to polar residues. A coiled-coil region spans residues 157 to 405 (SKVEQLQDET…QERLRQQDER (249 aa)). The span at 467–480 (KELEKSGGAEEPRG) shows a compositional bias: basic and acidic residues. The tract at residues 467–529 (KELEKSGGAE…VGTGEAAGGA (63 aa)) is disordered. Composition is skewed to low complexity over residues 484-499 (AAAA…PQGA) and 517-529 (GEAV…AGGA).

Belongs to the GOLGA6 family.

The protein is Putative golgin subfamily A member 6-like protein 19 (GOLGA6L19) of Homo sapiens (Human).